The chain runs to 163 residues: MPKPPDYSELSDSLTLAVGTGRFSGPLHRAWRMMNFRQRMGWIGVGLYLLASAAAFYYVFEISETYNRLALEHIQQHPEEPLEGTTWTHSLKAQLLSLPFWVWTVIFLVPYLQMFLFLYSCTRADPKTVGYCIIPICLAVICNRHQAFVKASNQISRLQLIDT.

Helical transmembrane passes span 40-60 and 98-118; these read MGWI…YYVF and LPFW…FLFL.

The protein belongs to the LYSET family. In terms of assembly, interacts with GNPTAB; this interaction is important for proper localization of GNPTAB in Golgi stacks. Interacts with MBTPS1.

It localises to the golgi apparatus membrane. Its function is as follows. Required for mannose-6-phosphate-dependent trafficking of lysosomal enzymes. LYSET bridges GlcNAc-1-phosphate transferase (GNPTAB), to the membrane-bound transcription factor site-1 protease (MBTPS1), thus allowing proteolytic activation of the GNPTAB. GNPTAB is involved in the regulation of M6P-dependent Golgi-to-lysosome trafficking of lysosomal enzymes. LYSET is thus an essential factor for maturation and delivery of lysosomal hydrolases. Functionally, (Microbial infection) Essential for infection by muliple viruses, including SARS-CoV-2, that utilize activated cathepsins for entry after M6P-dependent lysosomal transport. This chain is Lysosomal enzyme trafficking factor, found in Homo sapiens (Human).